The following is a 338-amino-acid chain: MNLQRFPRYPLTFGPTPIQPLKRLSAHLGGKVELYAKREDCNSGLAFGGNKTRKLEYLVPDALAQGADTLVSIGGVQSNQTRQVAAVAAHLGMKCVLVQEHWVNYEDPVYDRVGNIQLSRMMGADVRLVADGFDIGIRRSWEEAMESVRQAGGKPYPIPAGCSEHPLGGLGFVGFAEEVRAQEAELGFRFDYVVVCSVTGSTQAGMVVGFAADGRADRVIGIDASAKPEQTREQITRIARHTAELVGLGRDIVERDVVLDTRYGGPEYGLPSDGTLEAIRLCARLEGMLTDPVYEGKSMHGMIDKVRLGEFEPGSKVLYAHLGGAPALSAYNGIFRNG.

Lysine 51 carries the post-translational modification N6-(pyridoxal phosphate)lysine. The Nucleophile role is filled by serine 78.

It belongs to the ACC deaminase/D-cysteine desulfhydrase family. Homotrimer. The cofactor is pyridoxal 5'-phosphate.

The catalysed reaction is 1-aminocyclopropane-1-carboxylate + H2O = 2-oxobutanoate + NH4(+). Functionally, catalyzes a cyclopropane ring-opening reaction, the irreversible conversion of 1-aminocyclopropane-1-carboxylate (ACC) to ammonia and alpha-ketobutyrate. Allows growth on ACC as a nitrogen source. The protein is 1-aminocyclopropane-1-carboxylate deaminase of Burkholderia cenocepacia (strain ATCC BAA-245 / DSM 16553 / LMG 16656 / NCTC 13227 / J2315 / CF5610) (Burkholderia cepacia (strain J2315)).